Here is a 215-residue protein sequence, read N- to C-terminus: Cytochrome b6 (215 aa).

Residues 32-52 (IFYCLGGITLTCFIVQVATGF) traverse the membrane as a helical segment. Residue Cys35 participates in heme c binding. Heme b contacts are provided by His86 and His100. The next 3 helical transmembrane spans lie at 90 to 110 (ASMM…TGGF), 116 to 136 (LTWI…VTGY), and 186 to 206 (LHTF…FLMI). Positions 187 and 202 each coordinate heme b.

This sequence belongs to the cytochrome b family. PetB subfamily. In terms of assembly, the 4 large subunits of the cytochrome b6-f complex are cytochrome b6, subunit IV (17 kDa polypeptide, PetD), cytochrome f and the Rieske protein, while the 4 small subunits are PetG, PetL, PetM and PetN. The complex functions as a dimer. The cofactor is heme b. Heme c serves as cofactor.

The protein resides in the plastid. It is found in the chloroplast thylakoid membrane. In terms of biological role, component of the cytochrome b6-f complex, which mediates electron transfer between photosystem II (PSII) and photosystem I (PSI), cyclic electron flow around PSI, and state transitions. The protein is Cytochrome b6 of Chara vulgaris (Common stonewort).